Consider the following 212-residue polypeptide: NEDD4 family-interacting protein 1 (212 aa).

Residues 1-14 (MSEQSSSSRYQQLQ) are compositionally biased toward polar residues. The segment at 1-40 (MSEQSSSSRYQQLQNEEEPGENAQASADAPPPYSSIAGES) is disordered. Over 1 to 107 (MSEQSSSSRY…ADQLRIGNDG (107 aa)) the chain is Cytoplasmic. 2 consecutive short sequence motifs (PPxY motif) follow at residues 30-33 (PPPY) and 55-58 (PPSY). Residues 108–128 (IFMLTFFMAFLFNWIGFFLSF) traverse the membrane as a helical segment. Over 129–134 (CLTSSA) the chain is Extracellular. A helical transmembrane segment spans residues 135–155 (AGRYGAISGFGLSLIKWILIV). Topologically, residues 156–163 (RFSTYFPG) are cytoplasmic. The helical transmembrane segment at 164-184 (YFDGQYWLWWVFLVLGFLLFL) threads the bilayer. The Extracellular portion of the chain corresponds to 185 to 212 (RGFINYAKVRKMPDNFSTLPRTRVLFIY).

It is found in the golgi apparatus membrane. Functionally, may play a role in Golgi structure maintenance. The polypeptide is NEDD4 family-interacting protein 1 (ndfip1) (Xenopus laevis (African clawed frog)).